Consider the following 247-residue polypeptide: E3 SUMO-protein ligase NSE2 (247 aa).

Position 1 is an N-acetylmethionine (Met-1). Glycyl lysine isopeptide (Lys-Gly) (interchain with G-Cter in SUMO2) cross-links involve residues Lys-90 and Lys-107. The residue at position 116 (Ser-116) is a Phosphoserine. Glycyl lysine isopeptide (Lys-Gly) (interchain with G-Cter in SUMO2) cross-links involve residues Lys-125 and Lys-130. Residues 154–240 (VDEDMIVTQS…LRRAIESHNK (87 aa)) form an SP-RING-type zinc finger. Residues Cys-185, His-187, Cys-210, and Cys-215 each contribute to the Zn(2+) site.

It belongs to the NSE2 family. As to quaternary structure, component of the SMC5-SMC6 complex which consists at least of SMC5, SMC6, NSMCE2, NSMCE1, NSMCE4A or EID3 and NSMCE3. Sumoylated, possibly via autosumoylation.

It localises to the nucleus. It is found in the chromosome. The protein localises to the telomere. Its subcellular location is the PML body. The protein operates within protein modification; protein sumoylation. In terms of biological role, E3 SUMO-protein ligase component of the SMC5-SMC6 complex, a complex involved in DNA double-strand break repair by homologous recombination. Is not be required for the stability of the complex. The complex may promote sister chromatid homologous recombination by recruiting the SMC1-SMC3 cohesin complex to double-strand breaks. Acts as an E3 ligase mediating SUMO attachment to various proteins such as SMC6L1 and TSNAX, the shelterin complex subunits TERF1, TERF2, TINF2 and TERF2IP, RAD51AP1, and maybe the cohesin components RAD21 and STAG2. Required for recruitment of telomeres to PML nuclear bodies. Required for sister chromatid cohesion during prometaphase and mitotic progression. This is E3 SUMO-protein ligase NSE2 (Nsmce2) from Mus musculus (Mouse).